The following is a 259-amino-acid chain: tRNA (guanine-N(1)-)-methyltransferase (259 aa).

S-adenosyl-L-methionine-binding positions include Gly-117 and 137 to 142 (LGDFVL).

This sequence belongs to the RNA methyltransferase TrmD family. In terms of assembly, homodimer.

It is found in the cytoplasm. The catalysed reaction is guanosine(37) in tRNA + S-adenosyl-L-methionine = N(1)-methylguanosine(37) in tRNA + S-adenosyl-L-homocysteine + H(+). Specifically methylates guanosine-37 in various tRNAs. The polypeptide is tRNA (guanine-N(1)-)-methyltransferase (Polaromonas sp. (strain JS666 / ATCC BAA-500)).